A 226-amino-acid chain; its full sequence is 2,3-bisphosphoglycerate-dependent phosphoglycerate mutase (226 aa).

Substrate-binding positions include 8–15 (RHGQSVWN), 21–22 (TG), Arg58, 109–112 (ERMY), Lys120, 136–137 (RR), and 180–181 (GN). His9 acts as the Tele-phosphohistidine intermediate in catalysis. Glu109 (proton donor/acceptor) is an active-site residue.

This sequence belongs to the phosphoglycerate mutase family. BPG-dependent PGAM subfamily.

It catalyses the reaction (2R)-2-phosphoglycerate = (2R)-3-phosphoglycerate. Its pathway is carbohydrate degradation; glycolysis; pyruvate from D-glyceraldehyde 3-phosphate: step 3/5. Functionally, catalyzes the interconversion of 2-phosphoglycerate and 3-phosphoglycerate. The protein is 2,3-bisphosphoglycerate-dependent phosphoglycerate mutase of Chlamydia trachomatis serovar A (strain ATCC VR-571B / DSM 19440 / HAR-13).